Reading from the N-terminus, the 470-residue chain is uncharacterized protein (470 aa).

The interval serine 439–threonine 470 is disordered. The segment covering serine 443–threonine 463 has biased composition (basic residues).

This is an uncharacterized protein from Acanthamoeba polyphaga mimivirus (APMV).